The following is a 33-amino-acid chain: Fatty acid-binding protein, intestinal (33 aa).

It belongs to the calycin superfamily. Fatty-acid binding protein (FABP) family. As to expression, intestine.

The protein localises to the cytoplasm. Functionally, FABPs are thought to play a role in the intracellular transport of long-chain fatty acids and their acyl-CoA esters. The sequence is that of Fatty acid-binding protein, intestinal (fabp2) from Rhamdia sapo (South American catfish).